We begin with the raw amino-acid sequence, 436 residues long: Xylose isomerase (436 aa).

Residues H100 and D103 contribute to the active site. Mg(2+) contacts are provided by E231, E267, H270, D295, D306, D308, and D338.

This sequence belongs to the xylose isomerase family. In terms of assembly, homotetramer. The cofactor is Mg(2+).

The protein localises to the cytoplasm. It carries out the reaction alpha-D-xylose = alpha-D-xylulofuranose. The protein is Xylose isomerase of Chelativorans sp. (strain BNC1).